Consider the following 374-residue polypeptide: Putative glutamate--cysteine ligase 2-1 (374 aa).

It belongs to the glutamate--cysteine ligase type 2 family. YbdK subfamily.

It carries out the reaction L-cysteine + L-glutamate + ATP = gamma-L-glutamyl-L-cysteine + ADP + phosphate + H(+). Its function is as follows. ATP-dependent carboxylate-amine ligase which exhibits weak glutamate--cysteine ligase activity. The chain is Putative glutamate--cysteine ligase 2-1 from Saccharopolyspora erythraea (strain ATCC 11635 / DSM 40517 / JCM 4748 / NBRC 13426 / NCIMB 8594 / NRRL 2338).